A 542-amino-acid polypeptide reads, in one-letter code: Formate--tetrahydrofolate ligase (542 aa).

53–60 lines the ATP pocket; it reads TPAGEGKT.

This sequence belongs to the formate--tetrahydrofolate ligase family.

It carries out the reaction (6S)-5,6,7,8-tetrahydrofolate + formate + ATP = (6R)-10-formyltetrahydrofolate + ADP + phosphate. It participates in one-carbon metabolism; tetrahydrofolate interconversion. The chain is Formate--tetrahydrofolate ligase from Thermotoga maritima (strain ATCC 43589 / DSM 3109 / JCM 10099 / NBRC 100826 / MSB8).